A 136-amino-acid polypeptide reads, in one-letter code: Large ribosomal subunit protein bL21 (136 aa).

Residues 1–21 (MSETPSKAKASKPAESKAQAS) show a composition bias toward low complexity. The disordered stretch occupies residues 1–25 (MSETPSKAKASKPAESKAQASDSSG).

Belongs to the bacterial ribosomal protein bL21 family. Part of the 50S ribosomal subunit. Contacts protein L20.

This protein binds to 23S rRNA in the presence of protein L20. The sequence is that of Large ribosomal subunit protein bL21 from Synechococcus sp. (strain RCC307).